A 64-amino-acid polypeptide reads, in one-letter code: Neurotoxin lambda-MeuTx (64 aa).

The N-terminal stretch at Met1–Ala18 is a signal peptide. Residues Glu19–Arg27 constitute a propeptide that is removed on maturation. Intrachain disulfides connect Cys29–Cys43, Cys36–Cys49, and Cys42–Cys58.

Belongs to the scorpion calcin-like family. In terms of tissue distribution, expressed by the venom gland.

The protein localises to the secreted. Functionally, voltage-gated potassium channel (Kv) inhibitor. In addition it may increase intracellular calcium release through the activation of nuclear inositol 1,4,5-trisphosphate receptors (ITPR) of cardiomyocytes, thereby causing an increase in the contraction frequency of these cells. This chain is Neurotoxin lambda-MeuTx, found in Mesobuthus eupeus (Lesser Asian scorpion).